Reading from the N-terminus, the 360-residue chain is DNA primase large subunit PriL (360 aa).

The [4Fe-4S] cluster site is built by Cys237, Cys309, Cys318, and Cys325. The tract at residues 340-360 is disordered; the sequence is DDGDDDDLADWRDREDDDSPD.

This sequence belongs to the eukaryotic-type primase large subunit family. In terms of assembly, heterodimer of a small subunit (PriS) and a large subunit (PriL). It depends on [4Fe-4S] cluster as a cofactor.

In terms of biological role, regulatory subunit of DNA primase, an RNA polymerase that catalyzes the synthesis of short RNA molecules used as primers for DNA polymerase during DNA replication. Stabilizes and modulates the activity of the small subunit, increasing the rate of DNA synthesis, and conferring RNA synthesis capability. The DNA polymerase activity may enable DNA primase to also catalyze primer extension after primer synthesis. May also play a role in DNA repair. This Halobacterium salinarum (strain ATCC 29341 / DSM 671 / R1) protein is DNA primase large subunit PriL.